The sequence spans 65 residues: Cold shock-like protein CspC (65 aa).

The 60-residue stretch at 3–62 (GRVKWFNAEKGFGFIEREDGDDVFVHFSAIQQDGYKSLEEGQQVEFDIVDGARGPQAANV) folds into the CSD domain.

As to quaternary structure, homodimer.

The protein localises to the cytoplasm. This chain is Cold shock-like protein CspC (cspC), found in Bacillus cereus.